A 248-amino-acid chain; its full sequence is Probable transcriptional regulator LumQ (248 aa).

The HTH araC/xylS-type domain maps to 148–246 (VLIDNYIEQH…GMSPTRYQFF (99 aa)). DNA-binding regions (H-T-H motif) lie at residues 165–186 (AELS…KSQM) and 213–236 (LSQV…RRLY).

Functionally, probable transcriptional regulator. Its target gene(s) is not yet known. In Photobacterium leiognathi, this protein is Probable transcriptional regulator LumQ (lumQ).